Here is a 171-residue protein sequence, read N- to C-terminus: Adenine phosphoribosyltransferase (171 aa).

It belongs to the purine/pyrimidine phosphoribosyltransferase family. Homodimer.

Its subcellular location is the cytoplasm. It carries out the reaction AMP + diphosphate = 5-phospho-alpha-D-ribose 1-diphosphate + adenine. It functions in the pathway purine metabolism; AMP biosynthesis via salvage pathway; AMP from adenine: step 1/1. Functionally, catalyzes a salvage reaction resulting in the formation of AMP, that is energically less costly than de novo synthesis. The protein is Adenine phosphoribosyltransferase of Mesomycoplasma hyopneumoniae (strain 232) (Mycoplasma hyopneumoniae).